The chain runs to 332 residues: Isopentenyl phosphate kinase (332 aa).

Methionine 1 bears the N-acetylmethionine mark. 18–22 is a binding site for ATP; that stretch reads KLGGA. Alanine 96 serves as a coordination point for substrate. Glycine 97 is a binding site for ATP. Substrate-binding residues include histidine 101 and glycine 202. ATP is bound by residues aspartate 223, 228-233, glycine 279, and lysine 283; that span reads YDRPPS.

The protein belongs to the isopentenyl phosphate kinase family.

It localises to the cytoplasm. The protein localises to the cytosol. The enzyme catalyses isopentenyl phosphate + ATP = isopentenyl diphosphate + ADP. Catalyzes the formation of isopentenyl diphosphate (IPP), the universal five-carbon isoprenoid building block of all natural isoprenoids. Acts in parallel with the mevalonate (MVA) pathway and plays an important role in regulating the formation of both MVA and methylerythritol phosphate (MEP) pathway-derived terpenoid compounds by controlling the ratio of isopentenyl phosphate (IP) and dimethylallyl phosphate (DMAP) to isopentenyl diphosphate (IPP) and dimethylallyl diphosphate (DMAPP). Controls the levels of IP and DMAP that are competitive inhibitors of the farnesyl diphosphate synthase. Regulates the production of farnesyl diphosphate-derived terpenoids in the cytosol, and geranyl diphosphate-derived compounds in plastids. The polypeptide is Isopentenyl phosphate kinase (Arabidopsis thaliana (Mouse-ear cress)).